The chain runs to 375 residues: FAD-dependent catabolic D-arginine dehydrogenase DauA (375 aa).

Residues Ala-14, 32–33 (ER), 41–48 (STGRSAAH), Ala-171, and 331–336 (GGYGIQ) contribute to the FAD site.

The protein belongs to the FAD-dependent glycerol-3-phosphate dehydrogenase family. As to quaternary structure, monomer. It depends on FAD as a cofactor.

The catalysed reaction is D-arginine + A + H2O = 5-guanidino-2-oxopentanoate + AH2 + NH4(+). The enzyme catalyses a D-alpha-amino acid + A + H2O = a 2-oxocarboxylate + AH2 + NH4(+). Its activity is regulated as follows. Inhibited by D-arginine and D-lysine at high concentration. DauA is highly expressed within the cystic fibrosis (CF) lung, and it is required for virulence via the optimal production of hydrogen cyanide, pyocyanine, pyoverdine, rhamnolipid and alginate during biofilm formation. Involved in the catabolism of D-lysine and D-arginine. Under aerobic conditions, the arginine succinyltransferase (AST) and arginine transaminase (ATA) pathways are 2 major routes for L-arginine utilization as the sole source of carbon and nitrogen. The D-to-L racemization of arginine by DauA and DauB is necessary, before to be channeled into the AST and/or ATA pathways. DauA catalyzes the flavin-dependent oxidative deamination of D-arginine into 2-ketoarginine (2-KA) and ammonia. It also has dehydrogenase activity towards D-lysine, D-tyrosine, D-methionine, D-phenylalanine, D-ornithine, D-histidine and D-leucine as substrates. The polypeptide is FAD-dependent catabolic D-arginine dehydrogenase DauA (Pseudomonas aeruginosa (strain ATCC 15692 / DSM 22644 / CIP 104116 / JCM 14847 / LMG 12228 / 1C / PRS 101 / PAO1)).